Here is a 32-residue protein sequence, read N- to C-terminus: MSDINATRLPVWIGYSPCVGDDAVALLNRGEG.

Positions 1 to 10 (MSDINATRLP) are excised as a propeptide. The segment at residues 11–17 (VWIGYSP) is a cross-link (cyclopeptide (Val-Pro)). A propeptide spanning residues 18-32 (CVGDDAVALLNRGEG) is cleaved from the precursor.

Belongs to the MSDIN fungal toxin family. In terms of processing, processed by the macrocyclase-peptidase enzyme POPB to yield a toxic cyclic heptapeptide. POPB first removes 10 residues from the N-terminus. Conformational trapping of the remaining peptide forces the enzyme to release this intermediate rather than proceed to macrocyclization. The enzyme rebinds the remaining peptide in a different conformation and catalyzes macrocyclization of the N-terminal 7 residues.

In terms of biological role, probable toxin that belongs to the MSDIN-like toxin family responsible for a large number of food poisoning cases and deaths. In Amanita fuligineoides, this protein is MSDIN-like toxin proprotein 3.